Consider the following 800-residue polypeptide: Nucleolar RNA helicase 2-B (800 aa).

Residues Met-1 to Ser-14 are compositionally biased toward basic and acidic residues. Residues Met-1–Asn-200 are disordered. Residues Glu-114–Gly-124 show a composition bias toward polar residues. The Q motif motif lies at Gly-221–Ser-249. Positions Phe-252–Lys-431 constitute a Helicase ATP-binding domain. Ala-265 to Thr-272 is a binding site for ATP. The short motif at Asp-374–Asp-377 is the DEAD box element. The region spanning Asp-464 to Asp-620 is the Helicase C-terminal domain. A disordered region spans residues Ile-750–Arg-800. The span at Glu-752 to Arg-761 shows a compositional bias: basic and acidic residues. The span at Arg-789 to Arg-800 shows a compositional bias: basic residues.

The protein belongs to the DEAD box helicase family. DDX21/DDX50 subfamily. As to expression, widely expressed. Expressed at higher level in stomach. Expressed at lower level compared to ddx21-a.

It localises to the nucleus. The protein localises to the nucleolus. Its subcellular location is the nucleoplasm. The protein resides in the cytoplasm. It is found in the cytosol. It localises to the mitochondrion. The catalysed reaction is ATP + H2O = ADP + phosphate + H(+). Functionally, RNA helicase that acts as a sensor of the transcriptional status of both RNA polymerase (Pol) I and II: promotes ribosomal RNA (rRNA) processing and transcription from polymerase II (Pol II). Binds various RNAs, such as rRNAs, snoRNAs, 7SK and, at lower extent, mRNAs. In the nucleolus, localizes to rDNA locus, where it directly binds rRNAs and snoRNAs, and promotes rRNA transcription, processing and modification. Required for rRNA 2'-O-methylation, possibly by promoting the recruitment of late-acting snoRNAs SNORD56 and SNORD58 with pre-ribosomal complexes. In the nucleoplasm, binds 7SK RNA and is recruited to the promoters of Pol II-transcribed genes: acts by facilitating the release of P-TEFb from inhibitory 7SK snRNP in a manner that is dependent on its helicase activity, thereby promoting transcription of its target genes. Required to prevent R-loop-associated DNA damage and transcription-associated genomic instability. This chain is Nucleolar RNA helicase 2-B (ddx21-b), found in Xenopus laevis (African clawed frog).